We begin with the raw amino-acid sequence, 164 residues long: Endoribonuclease YbeY (164 aa).

Zn(2+)-binding residues include H117, H121, and H127.

The protein belongs to the endoribonuclease YbeY family. Zn(2+) serves as cofactor.

The protein localises to the cytoplasm. Functionally, single strand-specific metallo-endoribonuclease involved in late-stage 70S ribosome quality control and in maturation of the 3' terminus of the 16S rRNA. The chain is Endoribonuclease YbeY from Mycoplasma mycoides subsp. mycoides SC (strain CCUG 32753 / NCTC 10114 / PG1).